The chain runs to 541 residues: Forkhead box protein O (541 aa).

Residues 118–150 (NEQCGQLGGASSNGSTAMLHTPDGSNSHQTSFP) show a composition bias toward polar residues. Disordered regions lie at residues 118 to 168 (NEQC…GKKT) and 252 to 291 (WVIN…GAKK). Positions 175 to 268 (WGNMSYAELI…KPGRNPRRTR (94 aa)) form a DNA-binding region, fork-head. Threonine 273 carries the post-translational modification Phosphothreonine. Serine 319 is modified (phosphoserine; by CaMK2).

As to quaternary structure, interacts with rle-1. Interacts with unc-43 and tax-6. Interacts with jnk-1. Interacts with ftt-2. Interacts with prmt-1. Interacts with hcf-1. Phosphorylated by akt-1 and/or akt-2. Phosphorylated by sgk-1. Phosphorylated by unc-43. Phosphorylated by jnk-1. Dephosphorylated by tax-6 in vitro. Post-translationally, ubiquitinated. Ubiquitination by rle-1 leads to proteasome-mediated degradation. In terms of processing, methylation by prmt-1 prevents phosphorylation and promotes translocation to the nucleus to allow for daf-16-dependent transcription. Isoform b and isoform c are expressed in ectoderm, muscles, intestine and neurons. Isoform b is also expressed in the pharynx. The intestine appears to be the primary site of longevity function.

It localises to the nucleus. The protein localises to the cytoplasm. Functionally, forkhead-type transcription factor. Binds to the promoters of genes that contain the daf-16/FOXO binding element (DBE), TTGTTTAC, in their regulatory region. Functions in the Insulin/IGF-1-like signaling (IIS) mediated pathway which affects lipogenesis, lifespan, starvation survival, heat shock and oxidative stress responses, sleep, associative memory, and dauer formation. Longevity signaling predominantly arises from expression in the intestine. Acts in the intestine to mediate the role of slo-1 in age-associated decline in motor activity and longevity. Transcriptional activity of daf-16/FOXO is negatively regulated by interaction with host cell factor homolog hcf-1; and by cytoplasmic sequestration by association with ftt-2. Inhibition is required for the carbon dioxide (CO2) avoidance response. Upon loss of inhibition, daf-16 translocates to the nucleus to regulate genes that result in delayed reproduction and growth while increasing stress resistance starvation tolerance and longevity. Association with arginine methyltransferase prmt-1 prevents phosphorylation and allows for translocation to the nucleus and the subsequent transcription of longevity-related genes. Modulation of its activity by cGMP levels in sensory neurons regulates lifespan. Has a protective role against muscle dystrophy. Involved in mediating protection against aberrant protein aggregation proteotoxicity. Influences transcription of genes that code for proteins involved in immunity as part of a general stress response. Targets genes that inhibit and stimulate tumor growth. Targets kinases, phosphatases and transcription factors that are primarily involved in signaling and gene regulation. Thought to regulate ins-7 in FOXO-to-FOXO signaling, which coordinates daf-16 expression. Activity is positively regulated by shc-1-mediated inhibition of daf-2 and activation of JNK pathway. Through the regulation of its activity by shc-1-mediated inhibition of daf-2 and activation of JNK pathway, plays a role in maintaining the integrity of the gonad. Functions by indirect interaction with jnk-1 of the mitogen-activated protein kinase (MAPK) pathway. Involved in increased proteasome activity by activating expression of rpn-6.1 in response to proteotoxic stress, leading to enhanced assembly of the 26S proteasome, followed by higher proteasome activity. Also regulates proteasome activity in the intestine by preventing expression of deubiquitinase ubh-4. Represses transcription of natc-1. Involved in regulation of srh-234 expression. Binds to the promoter of the AMPK-gamma regulatory subunit, aakg-4, and activates its transcription. Also activates transcription of AMPK-gamma regulatory subunit, aakg-1. Maintains endoplasmic reticulum (ER) function by inducing protein degradation and elimination to remove misfolded secretory proteins from the ER independently of the ire-1/xbp-1 unfolded protein response pathway. Regulates epidermal innate immunity to nematophagous fungal infection and physical wounding which trigger bli-3 induced ROS release, leading to daf-16 activation independently of daf-2 signaling. May negatively regulate resistance to stress caused by oxidized cholesterol adducts by preventing the activation of daf-9 and nuclear hormone receptor daf-12, two members of the steroid signaling pathway. Promotes apoptosis during embryonic development. Probably through the regulation of the autophagy genes atg-18 and atg-16.2, plays a role in regulating stem cell number in the germline during larval development. Plays a role in learning and memory; including associative memory, and aversive gustatory associated learning known as salt avoidance learning. Plays a role in regulating gene transcription in response to white light exposure. Binds to the promoter of dex-1 to positively regulate its expression in seam cells during the dauer phase. Plays a role in transgenerational lipid accumulation in response to a high-fat diet. Functions in the Insulin/IGF-1-like signaling (IIS) mediated pathway. May play a role in lifespan modulation, but less significant than that played by isoforms d and f. Its function is as follows. Functions in the Insulin/IGF-1-like signaling (IIS) mediated pathway. Transcript level in the early adult may play a role in lifespan modulation, but effect is more significant than that played by isoform a. The sequence is that of Forkhead box protein O from Caenorhabditis elegans.